We begin with the raw amino-acid sequence, 161 residues long: Transcriptional repressor NrdR (161 aa).

A zinc finger spans residues 3 to 34; that stretch reads CPFCGKYDTKVTDSRLVAEGDQVRRRRQCNDC. Residues 49–139 form the ATP-cone domain; that stretch reads PRVIKGDGSR…VYRRFQDLDE (91 aa).

The protein belongs to the NrdR family. It depends on Zn(2+) as a cofactor.

In terms of biological role, negatively regulates transcription of bacterial ribonucleotide reductase nrd genes and operons by binding to NrdR-boxes. This is Transcriptional repressor NrdR from Chromohalobacter salexigens (strain ATCC BAA-138 / DSM 3043 / CIP 106854 / NCIMB 13768 / 1H11).